Consider the following 317-residue polypeptide: Aspartate carbamoyltransferase catalytic subunit (317 aa).

Carbamoyl phosphate is bound by residues Arg66 and Thr67. Lys94 contributes to the L-aspartate binding site. Carbamoyl phosphate-binding residues include Arg116, His144, and Gln147. The L-aspartate site is built by Arg177 and Arg231. Gly272 and Pro273 together coordinate carbamoyl phosphate.

This sequence belongs to the aspartate/ornithine carbamoyltransferase superfamily. ATCase family. Heterododecamer (2C3:3R2) of six catalytic PyrB chains organized as two trimers (C3), and six regulatory PyrI chains organized as three dimers (R2).

The enzyme catalyses carbamoyl phosphate + L-aspartate = N-carbamoyl-L-aspartate + phosphate + H(+). Its pathway is pyrimidine metabolism; UMP biosynthesis via de novo pathway; (S)-dihydroorotate from bicarbonate: step 2/3. In terms of biological role, catalyzes the condensation of carbamoyl phosphate and aspartate to form carbamoyl aspartate and inorganic phosphate, the committed step in the de novo pyrimidine nucleotide biosynthesis pathway. The polypeptide is Aspartate carbamoyltransferase catalytic subunit (Rhodopseudomonas palustris (strain BisB18)).